Reading from the N-terminus, the 137-residue chain is MTLMVRVITPDRTVWDAPSEEVILPATSGQLGILTGHAPLLTAIGNGVMRVKADGKWLAIAVMGGFAEVENNEVTVLVNRAERGEKVDKAAAQALLDEASKVLNTSSDKQERLQAKLDQQRARALIQAAEMGSKTGS.

Belongs to the ATPase epsilon chain family. F-type ATPases have 2 components, CF(1) - the catalytic core - and CF(0) - the membrane proton channel. CF(1) has five subunits: alpha(3), beta(3), gamma(1), delta(1), epsilon(1). CF(0) has three main subunits: a, b and c.

It localises to the cellular thylakoid membrane. In terms of biological role, produces ATP from ADP in the presence of a proton gradient across the membrane. The protein is ATP synthase epsilon chain of Synechococcus sp. (strain JA-2-3B'a(2-13)) (Cyanobacteria bacterium Yellowstone B-Prime).